We begin with the raw amino-acid sequence, 433 residues long: Pyrimidine-nucleoside phosphorylase (433 aa).

Residue 81-83 coordinates phosphate; sequence KHS. K(+) contacts are provided by Gly88 and Thr90. Phosphate contacts are provided by residues Thr92, 108 to 110, and Thr120; that span reads KMS. The substrate site is built by Arg168 and Lys187. Leu243, Ala246, and Glu255 together coordinate K(+).

Belongs to the thymidine/pyrimidine-nucleoside phosphorylase family. In terms of assembly, homodimer. Requires K(+) as cofactor.

It carries out the reaction uridine + phosphate = alpha-D-ribose 1-phosphate + uracil. The catalysed reaction is thymidine + phosphate = 2-deoxy-alpha-D-ribose 1-phosphate + thymine. The enzyme catalyses 2'-deoxyuridine + phosphate = 2-deoxy-alpha-D-ribose 1-phosphate + uracil. Functionally, catalyzes phosphorolysis of the pyrimidine nucleosides uridine, thymidine and 2'-deoxyuridine with the formation of the corresponding pyrimidine base and ribose-1-phosphate. This Staphylococcus epidermidis (strain ATCC 12228 / FDA PCI 1200) protein is Pyrimidine-nucleoside phosphorylase (pdp).